We begin with the raw amino-acid sequence, 571 residues long: Urease subunit alpha (571 aa).

Positions 133–571 (AGIDTHIHFI…VALNQRYFFS (439 aa)) constitute a Urease domain. Positions 138, 140, and 221 each coordinate Ni(2+). N6-carboxylysine is present on K221. H223 is a substrate binding site. H250 and H276 together coordinate Ni(2+). H324 acts as the Proton donor in catalysis. A Ni(2+)-binding site is contributed by D364.

The protein belongs to the metallo-dependent hydrolases superfamily. Urease alpha subunit family. As to quaternary structure, heterotrimer of UreA (gamma), UreB (beta) and UreC (alpha) subunits. Three heterotrimers associate to form the active enzyme. Requires Ni cation as cofactor. In terms of processing, carboxylation allows a single lysine to coordinate two nickel ions.

It is found in the cytoplasm. It carries out the reaction urea + 2 H2O + H(+) = hydrogencarbonate + 2 NH4(+). The protein operates within nitrogen metabolism; urea degradation; CO(2) and NH(3) from urea (urease route): step 1/1. In Photorhabdus laumondii subsp. laumondii (strain DSM 15139 / CIP 105565 / TT01) (Photorhabdus luminescens subsp. laumondii), this protein is Urease subunit alpha.